The primary structure comprises 668 residues: DNA ligase (668 aa).

NAD(+)-binding positions include Asp35–Asp39 and Ser83–Leu84. The active-site N6-AMP-lysine intermediate is the Lys125. NAD(+)-binding residues include Arg147, Glu181, and Lys317. Positions 410, 413, 426, and 432 each coordinate Zn(2+). The BRCT domain maps to Lys591–Asn668.

This sequence belongs to the NAD-dependent DNA ligase family. LigA subfamily. The cofactor is Mg(2+). Mn(2+) serves as cofactor.

It catalyses the reaction NAD(+) + (deoxyribonucleotide)n-3'-hydroxyl + 5'-phospho-(deoxyribonucleotide)m = (deoxyribonucleotide)n+m + AMP + beta-nicotinamide D-nucleotide.. Functionally, DNA ligase that catalyzes the formation of phosphodiester linkages between 5'-phosphoryl and 3'-hydroxyl groups in double-stranded DNA using NAD as a coenzyme and as the energy source for the reaction. It is essential for DNA replication and repair of damaged DNA. The chain is DNA ligase from Clostridium tetani (strain Massachusetts / E88).